Here is a 246-residue protein sequence, read N- to C-terminus: Ribonuclease PH (246 aa).

Residues 67–87 (NMLPGSTSPRKRRDRSGKVDG) form a disordered region. Phosphate contacts are provided by residues Arg-88 and 126–128 (GTR).

The protein belongs to the RNase PH family. Homohexameric ring arranged as a trimer of dimers.

The enzyme catalyses tRNA(n+1) + phosphate = tRNA(n) + a ribonucleoside 5'-diphosphate. Phosphorolytic 3'-5' exoribonuclease that plays an important role in tRNA 3'-end maturation. Removes nucleotide residues following the 3'-CCA terminus of tRNAs; can also add nucleotides to the ends of RNA molecules by using nucleoside diphosphates as substrates, but this may not be physiologically important. Probably plays a role in initiation of 16S rRNA degradation (leading to ribosome degradation) during starvation. The chain is Ribonuclease PH from Rhodopirellula baltica (strain DSM 10527 / NCIMB 13988 / SH1).